The chain runs to 951 residues: MASKRKSTTPCMIPVKTVVLPGASTEPQPVESLPEGPQQDLPSEAPDASSEAAPNPSSTDGSALANGHRSTLDGYVYCCKECEFRSQDVTHFIGHMNSEHTDFNKDPTFVCTGCSFLAKNPEGLSLHNAKCHSGEASFLWNVTKPDNHVVVEQSVPDSASSSVLAGESTTEGTEIIITKTPIMKIMKGKAEAKKIHMLKENAPNQPGSEALPKPLAGEREVKEGDHTFINGAAPGSQASAKSTKPPPAANGPLIGTVPVLPAGIAQFLSLQQQPPVHAQHHTHQPLPTSKTLPKVMIPLSSIPTYNAAMDSNSFLKNSFHKFPYPTKAELCYLTVVTKYPEEQLKIWFTAQRLKQGISWSPEEIEDARKKMFNTVIQSVPQPTITVLNTPLVASAGNVQHLIQATLPGHAVGQPEGTAGGLLVTQPLMANGLQASSSSLPLTTASVPKPTVAPINTVCSNSASAVKVVNAAQSLLTACPSITSQAFLDANIYKNKKSHEQLSALKGSFCRNQFPGQSEVEHLTKVTGLSTREVRKWFSDRRYHCRNLKGSRAMMPGEHGSVLIDSVPEVPFPLASKVPEVTCIPTATSLVSHPATKRQSWHQTPDFTPTKYKERAPEQLRVLENSFAQNPLPPEEELDRLRSETKMTRREIDGWFSERRKKVNTEETKKADGHMPKEEEEGAEQEGRDEELANELRVPGENGSPEMFLSHALAERKVSPIKINLKNLRVTEASGKSEFPGMGVCEPEEDGLNKLVEQPPSKVSYKKTAQQRHLLRQLFVQTQWPSNQDYDSIMAQTGLPRPEVVRWFGDSRYALKNGQLKWYEDYKRGNFPPGLLVIAPGNRELLQDYYMTHKMLCEEDLQTLCDKTQMSAQQVKQWFAEKMGEETRAVADISSEDQGPRNGEPVAVHKVLGDAYSELSENSESWEPSAPEASSEPFDTSSPQSGRQLEAD.

The interval 1-66 is disordered; sequence MASKRKSTTP…SSTDGSALAN (66 aa). A required for nuclear localization region spans residues 1-107; that stretch reads MASKRKSTTP…SEHTDFNKDP (107 aa). Low complexity predominate over residues 42–58; it reads PSEAPDASSEAAPNPSS. 2 consecutive C2H2-type zinc fingers follow at residues 77-100 and 109-132; these read YCCK…NSEH and FVCT…AKCH. Residues 227–252 are disordered; that stretch reads TFINGAAPGSQASAKSTKPPPAANGP. Positions 238–483 are required for homodimerization and interaction with NFYA; that stretch reads ASAKSTKPPP…LLTACPSITS (246 aa). A required for repressor activity region spans residues 299–497; it reads LSSIPTYNAA…DANIYKNKKS (199 aa). DNA-binding regions (homeobox) lie at residues 300–359 and 489–548; these read SSIP…GISW and ANIY…RNLK. A required for nuclear localization region spans residues 492 to 550; sequence YKNKKSHEQLSALKGSFCRNQFPGQSEVEHLTKVTGLSTREVRKWFSDRRYHCRNLKGS. Ser-599 is subject to Phosphoserine. Residues 607–666 constitute a DNA-binding region (homeobox 3); that stretch reads TPTKYKERAPEQLRVLENSFAQNPLPPEEELDRLRSETKMTRREIDGWFSERRKKVNTEE. A compositionally biased stretch (basic and acidic residues) spans 662 to 676; it reads VNTEETKKADGHMPK. A disordered region spans residues 662 to 690; it reads VNTEETKKADGHMPKEEEEGAEQEGRDEE. Positions 677 to 690 are enriched in acidic residues; the sequence is EEEEGAEQEGRDEE. Ser-703 and Ser-718 each carry phosphoserine. DNA-binding regions (homeobox) lie at residues 759-818 and 830-889; these read PSKV…KNGQ and FPPG…TRAV. Positions 916–951 are disordered; it reads SELSENSESWEPSAPEASSEPFDTSSPQSGRQLEAD. Low complexity predominate over residues 919–936; the sequence is SENSESWEPSAPEASSEP. Residues Ser-922 and Ser-941 each carry the phosphoserine modification. Residues 937-951 are compositionally biased toward polar residues; it reads FDTSSPQSGRQLEAD.

It belongs to the ZHX family. Homodimer (via homeobox domain 1). Heterodimer with ZHX1 (via homeobox domain 1). Heterodimer with ZHX2 (via homeobox domain 1). Heterodimerization with ZHX1 is a prerequisite for repressor activity. Interacts with NFYA. In terms of tissue distribution, ubiquitously expressed.

Its subcellular location is the nucleus. Acts as a transcriptional repressor. Involved in the early stages of mesenchymal stem cell (MSC) osteogenic differentiation. Is a regulator of podocyte gene expression during primary glomerula disease. Binds to promoter DNA. This Mus musculus (Mouse) protein is Zinc fingers and homeoboxes protein 3 (Zhx3).